We begin with the raw amino-acid sequence, 116 residues long: Protein Wnt-5(III) (116 aa).

Residue S1 is the site of O-palmitoleoyl serine; by PORCN attachment. A glycan (N-linked (GlcNAc...) asparagine) is linked at N69. An intrachain disulfide couples C82 to C97.

It belongs to the Wnt family. Palmitoleoylation is required for efficient binding to frizzled receptors. Depalmitoleoylation leads to Wnt signaling pathway inhibition.

It localises to the secreted. It is found in the extracellular space. The protein resides in the extracellular matrix. Its function is as follows. Ligand for members of the frizzled family of seven transmembrane receptors. Probable developmental protein. May be a signaling molecule which affects the development of discrete regions of tissues. Is likely to signal over only few cell diameters. This is Protein Wnt-5(III) (WNT-5(III)) from Eptatretus stoutii (Pacific hagfish).